A 109-amino-acid chain; its full sequence is Hainantoxin-XVIII-5 (109 aa).

An N-terminal signal peptide occupies residues 1 to 18 (MKLSIIIIATSLVIAVVA). Residues 19-46 (FPSKDSKAIENDKTEQRMEIVVQETARA) constitute a propeptide that is removed on maturation. Disulfide bonds link Cys47–Cys62, Cys55–Cys68, Cys59–Cys108, and Cys61–Cys81.

Belongs to the neurotoxin 25 family. F7 subfamily. In terms of tissue distribution, expressed by the venom gland.

The protein localises to the secreted. Its function is as follows. Putative ion channel inhibitor. This is Hainantoxin-XVIII-5 from Cyriopagopus hainanus (Chinese bird spider).